Here is a 158-residue protein sequence, read N- to C-terminus: Transcription elongation factor GreA (158 aa).

Residues 14–76 (LDQLKDELTH…EIESILKNVK (63 aa)) are a coiled coil.

Belongs to the GreA/GreB family.

In terms of biological role, necessary for efficient RNA polymerase transcription elongation past template-encoded arresting sites. The arresting sites in DNA have the property of trapping a certain fraction of elongating RNA polymerases that pass through, resulting in locked ternary complexes. Cleavage of the nascent transcript by cleavage factors such as GreA or GreB allows the resumption of elongation from the new 3'terminus. GreA releases sequences of 2 to 3 nucleotides. This Acholeplasma laidlawii (strain PG-8A) protein is Transcription elongation factor GreA.